A 246-amino-acid polypeptide reads, in one-letter code: DNA repair protein RecO (246 aa).

It belongs to the RecO family.

In terms of biological role, involved in DNA repair and RecF pathway recombination. The chain is DNA repair protein RecO from Methylorubrum extorquens (strain CM4 / NCIMB 13688) (Methylobacterium extorquens).